The following is a 561-amino-acid chain: Arginine--tRNA ligase (561 aa).

The 'HIGH' region motif lies at 129–139; the sequence is ANPTGPLHVGH.

It belongs to the class-I aminoacyl-tRNA synthetase family. As to quaternary structure, monomer.

Its subcellular location is the cytoplasm. It carries out the reaction tRNA(Arg) + L-arginine + ATP = L-arginyl-tRNA(Arg) + AMP + diphosphate. The sequence is that of Arginine--tRNA ligase from Bordetella petrii (strain ATCC BAA-461 / DSM 12804 / CCUG 43448).